A 550-amino-acid chain; its full sequence is Hydroxylamine reductase (550 aa).

[2Fe-2S] cluster contacts are provided by C3, C6, C18, and C25. Residues H249, E273, C317, C405, C433, C458, E492, and K494 each coordinate hybrid [4Fe-2O-2S] cluster. Cysteine persulfide is present on C405.

It belongs to the HCP family. [2Fe-2S] cluster serves as cofactor. Requires hybrid [4Fe-2O-2S] cluster as cofactor.

Its subcellular location is the cytoplasm. It carries out the reaction A + NH4(+) + H2O = hydroxylamine + AH2 + H(+). Its function is as follows. Catalyzes the reduction of hydroxylamine to form NH(3) and H(2)O. In Salmonella schwarzengrund (strain CVM19633), this protein is Hydroxylamine reductase.